Here is a 189-residue protein sequence, read N- to C-terminus: Casparian strip membrane protein 1 (189 aa).

At 1–25 the chain is on the cytoplasmic side; the sequence is MMQAESGSAEAKGPLPPPVGRKRRG. The chain crosses the membrane as a helical span at residues 26–46; the sequence is LGILDFLLRLLAIGATLSAAI. Topologically, residues 47 to 73 are extracellular; it reads TMGTTNETLQFFTQFFQFKARFYDLSA. N-linked (GlcNAc...) asparagine glycosylation occurs at N52. A helical membrane pass occupies residues 74–94; it reads FIYFVIANAIVGGYLLLSLPI. Residues 95–108 are Cytoplasmic-facing; the sequence is SILNIVRPRAASSR. A helical membrane pass occupies residues 109–129; that stretch reads VFLIFFDTVMVAVCTSGAAAA. Topologically, residues 130-158 are extracellular; the sequence is VAILYVARKGNSRTNWFAICQRFNSFCNQ. The helical transmembrane segment at 159–179 threads the bilayer; sequence AIGAVSASFAGVVFLILLVLL. Residues 180–189 lie on the Cytoplasmic side of the membrane; the sequence is SASTLYRRRP.

The protein belongs to the Casparian strip membrane proteins (CASP) family. Homodimer and heterodimers.

Its subcellular location is the cell membrane. Regulates membrane-cell wall junctions and localized cell wall deposition. Required for establishment of the Casparian strip membrane domain (CSD) and the subsequent formation of Casparian strips, a cell wall modification of the root endodermis that determines an apoplastic barrier between the intraorganismal apoplasm and the extraorganismal apoplasm and prevents lateral diffusion. The sequence is that of Casparian strip membrane protein 1 from Picea glauca (White spruce).